A 248-amino-acid polypeptide reads, in one-letter code: Phosphoadenosine 5'-phosphosulfate reductase (248 aa).

C239 functions as the Nucleophile; cysteine thiosulfonate intermediate in the catalytic mechanism.

This sequence belongs to the PAPS reductase family. CysH subfamily.

It localises to the cytoplasm. The catalysed reaction is [thioredoxin]-disulfide + sulfite + adenosine 3',5'-bisphosphate + 2 H(+) = [thioredoxin]-dithiol + 3'-phosphoadenylyl sulfate. It participates in sulfur metabolism; hydrogen sulfide biosynthesis; sulfite from sulfate: step 3/3. In terms of biological role, catalyzes the formation of sulfite from phosphoadenosine 5'-phosphosulfate (PAPS) using thioredoxin as an electron donor. This is Phosphoadenosine 5'-phosphosulfate reductase from Alteromonas mediterranea (strain DSM 17117 / CIP 110805 / LMG 28347 / Deep ecotype).